A 354-amino-acid chain; its full sequence is Guanine nucleotide-binding protein G(i) subunit alpha-1 (354 aa).

Glycine 2 is lipidated: N-myristoyl glycine. Cysteine 3 carries the S-palmitoyl cysteine lipid modification. Residues 32-354 (REVKLLLLGA…KNNLKDCGLF (323 aa)) enclose the G-alpha domain. The tract at residues 35–48 (KLLLLGAGESGKST) is G1 motif. GTP contacts are provided by residues 43–48 (ESGKST), 150–151 (DS), and 175–178 (LRTR). Serine 47 is a binding site for Mg(2+). The G2 motif stretch occupies residues 173–181 (DVLRTRVKT). Threonine 181 lines the Mg(2+) pocket. The interval 196 to 205 (FKMFDVGGQR) is G3 motif. Residues 200 to 204 (DVGGQ), 269 to 272 (NKKD), and alanine 326 contribute to the GTP site. A G4 motif region spans residues 265-272 (ILFLNKKD). The interval 324-329 (TCATDT) is G5 motif.

This sequence belongs to the G-alpha family. G(i/o/t/z) subfamily. As to quaternary structure, heterotrimeric G proteins are composed of 3 units; alpha, beta and gamma. The alpha chain contains the guanine nucleotide binding site. Part of a spindle orientation complex at least composed of GNAI1, GPSM2 and NUMA1. Identified in complex with the beta subunit GNB1 and the gamma subunit GNG1. Identified in complex with the beta subunit GNB1 and the gamma subunit GNG2. Component of the TAS2R14-GNAI1 complex, consisting of TAS2R14, GNAI1, GNB1 and GNG2; within the complex interacts with TAS2R14; this complex plays a role in the perception of bitterness. GTP binding causes dissociation of the heterotrimer, liberating the individual subunits so that they can interact with downstream effector proteins. Interacts (GDP-bound form) with GPSM1; this inhibits guanine nucleotide exchange and GTP binding. Interacts (GDP-bound form) with GPSM2 (via GoLoco domains); this inhibits guanine nucleotide exchange. Interacts with RGS10; this strongly enhances GTP hydrolysis. Interacts with RGS1 and RGS16; this strongly enhances GTPase activity. Interacts with RGS4. Interacts with RGS12. Interacts (via active GTP- or inactive GDP-bound forms) with RGS14 (via RGS and GoLoco domains). Interacts with RGS3, RGS6, RGS7, RGS8, RGS17, RGS18 and RGS20 (in vitro). Interacts (GDP-bound form) with RIC8A (via C-terminus); promoting GNAI1 folding and association with the plasma membrane. Interacts (inactive GDP-bound form) with NUCB1 (via GBA motif); the interaction leads to activation of GNAI1. Interacts (inactive GDP-bound form) with CCDC88C/DAPLE (via GBA motif); the interaction leads to activation of GNAI1. Interacts (inactive GDP-bound form) with CCDC8A/GIV (via GBA motif). Post-translationally, myristoylation at Gly-2 is required for membrane anchoring before palmitoylation. In terms of processing, palmitoylation at Cys-3 varies with membrane lipid composition. As to expression, mainly expressed in the brain, lung and kidney.

The protein localises to the nucleus. Its subcellular location is the cytoplasm. It is found in the cell membrane. It localises to the cytoskeleton. The protein resides in the microtubule organizing center. The protein localises to the centrosome. Its subcellular location is the cell cortex. It is found in the membrane. It catalyses the reaction GTP + H2O = GDP + phosphate + H(+). In terms of biological role, guanine nucleotide-binding proteins (G proteins) function as transducers downstream of G protein-coupled receptors (GPCRs) in numerous signaling cascades. The alpha chain contains the guanine nucleotide binding site and alternates between an active, GTP-bound state and an inactive, GDP-bound state. Signaling by an activated GPCR promotes GDP release and GTP binding. The alpha subunit has a low GTPase activity that converts bound GTP to GDP, thereby terminating the signal. Both GDP release and GTP hydrolysis are modulated by numerous regulatory proteins. Signaling is mediated via effector proteins, such as adenylate cyclase. Inhibits adenylate cyclase activity of ADCY1, ADCY5 and ADCY6, leading to decreased intracellular cAMP levels. The inactive GDP-bound form prevents the association of RGS14 with centrosomes and is required for the translocation of RGS14 from the cytoplasm to the plasma membrane. Required for normal cytokinesis during mitosis. Required for cortical dynein-dynactin complex recruitment during metaphase. The chain is Guanine nucleotide-binding protein G(i) subunit alpha-1 (GNAI1) from Cavia porcellus (Guinea pig).